The primary structure comprises 161 residues: Transcriptional repressor NrdR (161 aa).

The tract at residues 1-23 (MRCPFCGHPDTQVKDSRPAEDGN) is disordered. The segment at 3-34 (CPFCGHPDTQVKDSRPAEDGNAIRRRRQCPSC) is a zinc-finger region. Basic and acidic residues predominate over residues 11-23 (TQVKDSRPAEDGN). The ATP-cone domain occupies 49–139 (LTVMKKSGRR…VYKDFHKVED (91 aa)).

This sequence belongs to the NrdR family. Zn(2+) serves as cofactor.

Functionally, negatively regulates transcription of bacterial ribonucleotide reductase nrd genes and operons by binding to NrdR-boxes. This chain is Transcriptional repressor NrdR, found in Maricaulis maris (strain MCS10) (Caulobacter maris).